We begin with the raw amino-acid sequence, 3535 residues long: Lysosomal-trafficking regulator (3535 aa).

The segment at 412 to 436 is disordered; the sequence is MESSASTAMPKQQQHPRHKRQRSSQ. Residues 689–736 form a WD 1 repeat; it reads TLSRRLIQLQLNSSDRASQLFQALLYKCSKHSRAKFWLDESSTPAKLE. Over residues 1066–1096 the composition is skewed to polar residues; it reads STHQEPTGVVNSPSGDSQQPRPRARSFNSGS. 2 disordered regions span residues 1066–1132 and 1592–1613; these read STHQ…NAGV and GEGQ…TLDG. A compositionally biased stretch (low complexity) spans 1596–1610; the sequence is PTGRSPGSSSSSRST. The 99-residue stretch at 2686–2784 folds into the BEACH-type PH domain; the sequence is SLNSQILYNF…MREVFCDKIV (99 aa). Positions 2784–3081 constitute a BEACH domain; the sequence is VATPDQSKVI…QLFKSPHPAS (298 aa). Residues 3254–3287 are disordered; that stretch reads GIGGGGSERVDEAGNLHPTSSASSVNSSSISSGG. A compositionally biased stretch (low complexity) spans 3273–3285; it reads SSASSVNSSSISS. WD repeat units follow at residues 3307 to 3346, 3442 to 3486, and 3489 to 3527; these read RHTD…YVRT, VHED…FVSE, and TGTS…GNAP.

As to quaternary structure, interacts with Rab5; the interaction is independent of GDP or GTP. Interacts with msps.

The protein localises to the vesicle. The protein resides in the cytoplasm. It localises to the cytoskeleton. It is found in the spindle. Its subcellular location is the spindle pole. Adapter protein that regulates intracellular membrane fusion reactions. Regulates the fusion of lysosome-related organelles. Promotes microtubules nucleation and centrosomal recruitment of microtubule nucleating proteins such as msps. In syncytial embryos, during the formation of yolk granules, suppresses vesicle fusion events with lipid droplets, possibly via interaction with Rab5. In the eye, regulates pigment granules size. In hemocytes, required for the late steps of bacteria phagocytosis. In fat body, required for autophagosome maturation. The polypeptide is Lysosomal-trafficking regulator (Drosophila melanogaster (Fruit fly)).